The following is a 27-amino-acid chain: Secretin (27 aa).

Met-27 carries the post-translational modification Methionine amide.

It belongs to the glucagon family.

It localises to the secreted. Functionally, hormone involved in different processes, such as regulation of the pH of the duodenal content, food intake and water homeostasis. Exerts its biological effects by binding to secretin receptor (SCTR), a G-protein coupled receptor expressed in the basolateral domain of several cells. The sequence is that of Secretin from Gallus gallus (Chicken).